A 314-amino-acid polypeptide reads, in one-letter code: BRCA2 and CDKN1A-interacting protein (314 aa).

Positions 1–56 (MASRSKRRAVESGVPQPPDPPVQRDEEEEKEVENEDEDDDDSDKEKDEEDEVIDEE) are disordered. Positions 25–56 (DEEEEKEVENEDEDDDDSDKEKDEEDEVIDEE) are enriched in acidic residues. 2 positions are modified to phosphoserine: serine 42 and serine 112. The interval 59-167 (IEFEAYSLSD…EKSMVEQLDK (109 aa)) is interaction with BRCA2. Positions 161–259 (MVEQLDKFLN…NAEEEFFYEK (99 aa)) are interaction with CDKN1A. Serine 281 carries the phosphoserine modification.

This sequence belongs to the BCP1 family. In terms of assembly, interacts with BRCA2, CDKN1A and MTDH/LYRIC. Isoform 2/alpha, but not isoform 1/beta, interacts with DCTN1/p150-glued and ACTR1A/ARP1. Both isoform 1 and isoform 2 interact with alpha-, beta- and gamma-tubulins. Interacts with TENT5C; the interaction has no effect on TENT5C poly(A) polymerase function. Expressed at high levels in testis and skeletal muscle and at lower levels in brain, heart, kidney, liver, lung, ovary, pancreas, placenta, and spleen.

The protein resides in the nucleus. The protein localises to the cytoplasm. Its subcellular location is the cytoskeleton. It is found in the microtubule organizing center. It localises to the centrosome. The protein resides in the centriole. The protein localises to the spindle pole. Functionally, during interphase, required for microtubule organizing and anchoring activities. During mitosis, required for the organization and stabilization of the spindle pole. Isoform 2/alpha is particularly important for the regulation of microtubule anchoring, microtubule stability, spindle architecture and spindle orientation, compared to isoform 1/beta. May promote cell cycle arrest by enhancing the inhibition of CDK2 activity by CDKN1A. May be required for repair of DNA damage by homologous recombination in conjunction with BRCA2. May not be involved in non-homologous end joining (NHEJ). This Homo sapiens (Human) protein is BRCA2 and CDKN1A-interacting protein (BCCIP).